A 421-amino-acid chain; its full sequence is Gamma-glutamyl phosphate reductase (421 aa).

Belongs to the gamma-glutamyl phosphate reductase family.

The protein localises to the cytoplasm. It carries out the reaction L-glutamate 5-semialdehyde + phosphate + NADP(+) = L-glutamyl 5-phosphate + NADPH + H(+). The protein operates within amino-acid biosynthesis; L-proline biosynthesis; L-glutamate 5-semialdehyde from L-glutamate: step 2/2. Catalyzes the NADPH-dependent reduction of L-glutamate 5-phosphate into L-glutamate 5-semialdehyde and phosphate. The product spontaneously undergoes cyclization to form 1-pyrroline-5-carboxylate. The polypeptide is Gamma-glutamyl phosphate reductase (Bordetella petrii (strain ATCC BAA-461 / DSM 12804 / CCUG 43448)).